Here is a 708-residue protein sequence, read N- to C-terminus: Glutamate--tRNA ligase, cytoplasmic (708 aa).

Interaction with ARC1 stretches follow at residues 106 to 115 and 141 to 157; these read NLRTFILGGL and KVDV…EMDP. An L-glutamate-binding site is contributed by 205–207; sequence RFP. The 'HIGH' region signature appears at 210-219; that stretch reads PSGYLHIGHA. Histidine 215 is a binding site for ATP. Aspartate 241 is a binding site for L-glutamate. Threonine 300 is subject to Phosphothreonine. L-glutamate contacts are provided by residues 382-386 and arginine 400; that span reads YDFCV. Residues glutamate 403 and 437 to 441 contribute to the ATP site; that span reads LLSKR. Residues 437–441 carry the 'KMSKS' region motif; that stretch reads LLSKR.

The protein belongs to the class-I aminoacyl-tRNA synthetase family. Glutamate--tRNA ligase type 2 subfamily. Component of a yeast aminoacyl-tRNA synthase (aaRS) complex formed by methionyl-tRNA synthase MES1, glutamyl-tRNA synthase GUS1 and the tRNA aminoacylation cofactor ARC1 in a stoichiometric complex. Interacts (via N-ter) with ARC1 (via N-ter). Can also form a stable binary complex with ARC1 that is functional in terms of aminoacylation. ARC1 increases the affinity for cognate tRNAs due to the presence of a tRNA binding domain in the middle and C-terminal part of ARC1.

The protein resides in the cytoplasm. Its subcellular location is the mitochondrion. The enzyme catalyses tRNA(Glu) + L-glutamate + ATP = L-glutamyl-tRNA(Glu) + AMP + diphosphate. Catalyzes the attachment of glutamate to tRNA(Glu) in a two-step reaction: glutamate is first activated by ATP to form Glu-AMP and then transferred to the acceptor end of tRNA(Glu). In mitochondria, constitutes the nondiscriminating glutamyl-tRNA synthase that generates the mitochondrial mischarged glutamyl-tRNA(Gln) substrate for the tRNA-dependent amidotransferase (AdT), which generates mitochondrial glutaminyl-tRNA(Gln) by transamidation of glutamyl-tRNA(Gln). The polypeptide is Glutamate--tRNA ligase, cytoplasmic (GUS1) (Saccharomyces cerevisiae (strain ATCC 204508 / S288c) (Baker's yeast)).